A 245-amino-acid polypeptide reads, in one-letter code: Ubiquinone/menaquinone biosynthesis C-methyltransferase UbiE (245 aa).

Residues threonine 71, aspartate 92, and aspartate 118–alanine 119 contribute to the S-adenosyl-L-methionine site.

It belongs to the class I-like SAM-binding methyltransferase superfamily. MenG/UbiE family.

It carries out the reaction a 2-demethylmenaquinol + S-adenosyl-L-methionine = a menaquinol + S-adenosyl-L-homocysteine + H(+). The catalysed reaction is a 2-methoxy-6-(all-trans-polyprenyl)benzene-1,4-diol + S-adenosyl-L-methionine = a 5-methoxy-2-methyl-3-(all-trans-polyprenyl)benzene-1,4-diol + S-adenosyl-L-homocysteine + H(+). Its pathway is quinol/quinone metabolism; menaquinone biosynthesis; menaquinol from 1,4-dihydroxy-2-naphthoate: step 2/2. It participates in cofactor biosynthesis; ubiquinone biosynthesis. In terms of biological role, methyltransferase required for the conversion of demethylmenaquinol (DMKH2) to menaquinol (MKH2) and the conversion of 2-polyprenyl-6-methoxy-1,4-benzoquinol (DDMQH2) to 2-polyprenyl-3-methyl-6-methoxy-1,4-benzoquinol (DMQH2). The protein is Ubiquinone/menaquinone biosynthesis C-methyltransferase UbiE of Neisseria gonorrhoeae (strain ATCC 700825 / FA 1090).